The sequence spans 90 residues: Small ribosomal subunit protein bS20 (90 aa).

Belongs to the bacterial ribosomal protein bS20 family.

Its function is as follows. Binds directly to 16S ribosomal RNA. This Rickettsia canadensis (strain McKiel) protein is Small ribosomal subunit protein bS20.